Consider the following 285-residue polypeptide: GTP-binding protein 8 (285 aa).

An EngB-type G domain is found at 110-283 (RQPEVCFIGR…KCFIADITGS (174 aa)). GTP-binding positions include 118-125 (GRSNVGKS), 147-151 (GHTKK), 165-168 (DMPG), 227-230 (TKID), and 262-264 (ISA). Residues Ser125 and Thr149 each contribute to the Mg(2+) site.

The protein belongs to the TRAFAC class TrmE-Era-EngA-EngB-Septin-like GTPase superfamily. EngB GTPase family. The cofactor is Mg(2+).

The chain is GTP-binding protein 8 (Gtpbp8) from Rattus norvegicus (Rat).